The chain runs to 303 residues: tRNA-cytidine(32) 2-sulfurtransferase (303 aa).

The PP-loop motif signature appears at 49–54; the sequence is SGGKDS. 3 residues coordinate [4Fe-4S] cluster: Cys-124, Cys-127, and Cys-215.

This sequence belongs to the TtcA family. As to quaternary structure, homodimer. Mg(2+) is required as a cofactor. [4Fe-4S] cluster serves as cofactor.

The protein localises to the cytoplasm. The enzyme catalyses cytidine(32) in tRNA + S-sulfanyl-L-cysteinyl-[cysteine desulfurase] + AH2 + ATP = 2-thiocytidine(32) in tRNA + L-cysteinyl-[cysteine desulfurase] + A + AMP + diphosphate + H(+). The protein operates within tRNA modification. Its function is as follows. Catalyzes the ATP-dependent 2-thiolation of cytidine in position 32 of tRNA, to form 2-thiocytidine (s(2)C32). The sulfur atoms are provided by the cysteine/cysteine desulfurase (IscS) system. This is tRNA-cytidine(32) 2-sulfurtransferase from Anaeromyxobacter sp. (strain Fw109-5).